Consider the following 335-residue polypeptide: Anthranilate phosphoribosyltransferase (335 aa).

5-phospho-alpha-D-ribose 1-diphosphate-binding positions include Gly-79, 82 to 83 (GD), Thr-87, 89 to 92 (NIST), 107 to 115 (KHCNQGVSS), and Ser-119. Gly-79 lines the anthranilate pocket. A Mg(2+)-binding site is contributed by Ser-91. Asn-110 is a binding site for anthranilate. Arg-165 contacts anthranilate. Positions 223 and 224 each coordinate Mg(2+).

Belongs to the anthranilate phosphoribosyltransferase family. In terms of assembly, homodimer. The cofactor is Mg(2+).

It carries out the reaction N-(5-phospho-beta-D-ribosyl)anthranilate + diphosphate = 5-phospho-alpha-D-ribose 1-diphosphate + anthranilate. It functions in the pathway amino-acid biosynthesis; L-tryptophan biosynthesis; L-tryptophan from chorismate: step 2/5. Catalyzes the transfer of the phosphoribosyl group of 5-phosphorylribose-1-pyrophosphate (PRPP) to anthranilate to yield N-(5'-phosphoribosyl)-anthranilate (PRA). This Buchnera aphidicola subsp. Diuraphis noxia protein is Anthranilate phosphoribosyltransferase.